A 142-amino-acid polypeptide reads, in one-letter code: Peptide methionine sulfoxide reductase MsrB (142 aa).

The 124-residue stretch at 2–125 (LKKDKSELTD…NSAAIQFIPY (124 aa)) folds into the MsrB domain. Residue Cys-114 is the Nucleophile of the active site.

The protein belongs to the MsrB Met sulfoxide reductase family.

The enzyme catalyses L-methionyl-[protein] + [thioredoxin]-disulfide + H2O = L-methionyl-(R)-S-oxide-[protein] + [thioredoxin]-dithiol. The sequence is that of Peptide methionine sulfoxide reductase MsrB from Staphylococcus aureus (strain Mu3 / ATCC 700698).